Here is a 120-residue protein sequence, read N- to C-terminus: Meiosis expressed gene 1 protein homolog (120 aa).

Positions 1–45 are disordered; it reads MDGLAIGGVSAPMTAERPQQVKKQLSRRTPDAADGRKPTRMERAK. Basic and acidic residues predominate over residues 28–45; sequence RTPDAADGRKPTRMERAK.

This sequence belongs to the MEIG1 family.

In Oxyrrhis marina (Dinoflagellate), this protein is Meiosis expressed gene 1 protein homolog.